The chain runs to 428 residues: Serine--tRNA ligase (428 aa).

234–236 is an L-serine binding site; it reads TAE. 265–267 contacts ATP; the sequence is RRE. L-serine is bound at residue glutamate 288. 352-355 contacts ATP; it reads EISS. An L-serine-binding site is contributed by serine 388.

This sequence belongs to the class-II aminoacyl-tRNA synthetase family. Type-1 seryl-tRNA synthetase subfamily. As to quaternary structure, homodimer. The tRNA molecule binds across the dimer.

The protein resides in the cytoplasm. It carries out the reaction tRNA(Ser) + L-serine + ATP = L-seryl-tRNA(Ser) + AMP + diphosphate + H(+). The catalysed reaction is tRNA(Sec) + L-serine + ATP = L-seryl-tRNA(Sec) + AMP + diphosphate + H(+). It functions in the pathway aminoacyl-tRNA biosynthesis; selenocysteinyl-tRNA(Sec) biosynthesis; L-seryl-tRNA(Sec) from L-serine and tRNA(Sec): step 1/1. Catalyzes the attachment of serine to tRNA(Ser). Is also able to aminoacylate tRNA(Sec) with serine, to form the misacylated tRNA L-seryl-tRNA(Sec), which will be further converted into selenocysteinyl-tRNA(Sec). The polypeptide is Serine--tRNA ligase (Synechococcus elongatus (strain ATCC 33912 / PCC 7942 / FACHB-805) (Anacystis nidulans R2)).